A 1220-amino-acid chain; its full sequence is Plasma membrane calcium-transporting ATPase 1 (1220 aa).

At G2 the chain carries N-acetylglycine. Over 2–105 (GDMANNSVAY…KTFLQLVWEA (104 aa)) the chain is Cytoplasmic. Phosphoserine occurs at positions 8 and 17. Residues 106 to 126 (LQDVTLIILEIAAIVSLGLSF) form a helical membrane-spanning segment. Residues 127 to 154 (YQPPEGDNALCGEVSVGEEEGEGETGWI) lie on the Extracellular side of the membrane. Residues 155–175 (EGAAILLSVVCVVLVTAFNDW) form a helical membrane-spanning segment. Topologically, residues 176 to 366 (SKEKQFRGLQ…KEKSVLQGKL (191 aa)) are cytoplasmic. Positions 297–356 (EEEKKDEKKKEKKNKKQDGAIENRNKAKAQDGAAMEMQPLKSEEGGDGDEKDKKKANLPK) are disordered. Composition is skewed to basic and acidic residues over residues 312–325 (KQDG…KAKA) and 337–356 (KSEE…NLPK). S338 carries the phosphoserine modification. The chain crosses the membrane as a helical span at residues 367–386 (TKLAVQIGKAGLLMSAITVI). At 387-418 (ILVLYFVIDTFWVQKRPWLAECTPIYIQYFVK) the chain is on the extracellular side. The helical transmembrane segment at 419–439 (FFIIGVTVLVVAVPEGLPLAV) threads the bilayer. At 440-855 (TISLAYSVKK…RNVYDSISKF (416 aa)) the chain is on the cytoplasmic side. Residue D475 is the 4-aspartylphosphate intermediate of the active site. Positions 475, 477, and 797 each coordinate Mg(2+). The helical transmembrane segment at 856 to 876 (LQFQLTVNVVAVIVAFTGACI) threads the bilayer. The Extracellular segment spans residues 877–882 (TQDSPL). Residues 883–903 (KAVQMLWVNLIMDTLASLALA) traverse the membrane as a helical segment. At 904–927 (TEPPTESLLLRKPYGRNKPLISRT) the chain is on the cytoplasmic side. The chain crosses the membrane as a helical span at residues 928–948 (MMKNILGHAFYQLVVVFTLLF). The Extracellular segment spans residues 949 to 971 (AGEKFFDIDSGRNAPLHAPPSEH). The helical transmembrane segment at 972–991 (YTIVFNTFVLMQLFNEINAR) threads the bilayer. The Cytoplasmic segment spans residues 992–1005 (KIHGERNVFEGIFN). Residues 1006-1027 (NAIFCTIVLGTFVVQIIIVQFG) traverse the membrane as a helical segment. Over 1028–1039 (GKPFSCSELSIE) the chain is Extracellular. A helical membrane pass occupies residues 1040–1060 (QWLWSIFLGMGTLLWGQLIST). Residues 1061–1220 (IPTSRLKFLK…SPLHSLETSL (160 aa)) are Cytoplasmic-facing. The calmodulin-binding subdomain A stretch occupies residues 1100 to 1117 (LRRGQILWFRGLNRIQTQ). T1116 carries the post-translational modification Phosphothreonine; by PKC. The tract at residues 1118–1220 (IRVVNAFRSS…SPLHSLETSL (103 aa)) is required for basolateral membrane targeting. Phosphoserine is present on residues S1140 and S1155. The interval 1162 to 1220 (IDDTDAEDDAPTKRNSSPPPSPNKNNNAVDSGIHLTIEMNKSATSSSPGSPLHSLETSL) is disordered. T1165 carries the phosphothreonine modification. At S1177 the chain carries Phosphoserine; by PKA. Residues S1178 and S1182 each carry the phosphoserine modification. Residues 1200 to 1220 (MNKSATSSSPGSPLHSLETSL) show a composition bias toward polar residues.

This sequence belongs to the cation transport ATPase (P-type) (TC 3.A.3) family. Type IIB subfamily. Monomer. Dimer. Oligomer. Calmodulin binding. Interacts with PDZD11. Interacts with SLC35G1 and STIM1. Interacts with YWHAE; interacts with the monomeric and dimeric forms of the YWHAE but prefer the monomer form; this interaction inhibits calcium-transporting ATPase activity. Interacts with NPTN; this interaction stabilizes ATP2B1 and increases ATPase activity; this interaction controls T cell calcium homeostasis following T cell activation. Interacts with EPB41; regulates small intestinal calcium absorption through regulation of membrane expression of ATP2B1. In terms of tissue distribution, isoform B is ubiquitously expressed. Isoforms A and E have only been found in brain cortex. Isoform C is found in brain cortex, skeletal muscle and heart muscle. Isoform D has only been found in fetal skeletal muscle. Isoform K has been found in small intestine and liver. Isoform B is expressed in hair cells of inner ear.

The protein localises to the cell membrane. It localises to the basolateral cell membrane. The protein resides in the synapse. Its subcellular location is the presynaptic cell membrane. It is found in the cytoplasmic vesicle. The protein localises to the secretory vesicle. It localises to the synaptic vesicle membrane. It carries out the reaction Ca(2+)(in) + ATP + H2O = Ca(2+)(out) + ADP + phosphate + H(+). Functionally, catalyzes the hydrolysis of ATP coupled with the transport of calcium from the cytoplasm to the extracellular space thereby maintaining intracellular calcium homeostasis. Plays a role in blood pressure regulation through regulation of intracellular calcium concentration and nitric oxide production leading to regulation of vascular smooth muscle cells vasoconstriction. Positively regulates bone mineralization through absorption of calcium from the intestine. Plays dual roles in osteoclast differentiation and survival by regulating RANKL-induced calcium oscillations in preosteoclasts and mediating calcium extrusion in mature osteoclasts. Regulates insulin sensitivity through calcium/calmodulin signaling pathway by regulating AKT1 activation and NOS3 activation in endothelial cells. May play a role in synaptic transmission by modulating calcium and proton dynamics at the synaptic vesicles. The chain is Plasma membrane calcium-transporting ATPase 1 from Rattus norvegicus (Rat).